The primary structure comprises 451 residues: tRNA modification GTPase MnmE (451 aa).

Residues R37, E95, and K135 each coordinate (6S)-5-formyl-5,6,7,8-tetrahydrofolate. In terms of domain architecture, TrmE-type G spans 232–376 (GLSIVIMGPP…LVEAIADFAG (145 aa)). Residue N242 participates in K(+) binding. Residues 242–247 (NAGKST), 261–267 (SEIAGTT), and 286–289 (DTAG) contribute to the GTP site. S246 provides a ligand contact to Mg(2+). Residues S261, I263, and T266 each coordinate K(+). T267 lines the Mg(2+) pocket. K451 is a (6S)-5-formyl-5,6,7,8-tetrahydrofolate binding site.

The protein belongs to the TRAFAC class TrmE-Era-EngA-EngB-Septin-like GTPase superfamily. TrmE GTPase family. As to quaternary structure, homodimer. Heterotetramer of two MnmE and two MnmG subunits. The cofactor is K(+).

It is found in the cytoplasm. Its function is as follows. Exhibits a very high intrinsic GTPase hydrolysis rate. Involved in the addition of a carboxymethylaminomethyl (cmnm) group at the wobble position (U34) of certain tRNAs, forming tRNA-cmnm(5)s(2)U34. The sequence is that of tRNA modification GTPase MnmE from Beijerinckia indica subsp. indica (strain ATCC 9039 / DSM 1715 / NCIMB 8712).